A 476-amino-acid chain; its full sequence is Rho GTPase-activating protein 68F (476 aa).

Disordered stretches follow at residues 1–35 and 241–266; these read MDAH…DLHD and DKLN…QQQH. Residues S29 and S31 each carry the phosphoserine modification. One can recognise a CRAL-TRIO domain in the interval 91–244; it reads SENFQTPRNK…NICDLDDKLN (154 aa). T251 bears the Phosphothreonine mark. Polar residues predominate over residues 257–266; the sequence is NINASRQQQH. The 189-residue stretch at 276–464 folds into the Rho-GAP domain; that stretch reads VPLKFIVMNS…FVLQNHKDIY (189 aa).

Functionally, functions as a GTPase-activating protein (GAP) for RhoA/Rho1 during gastrulation by converting it to an inactive GDP-bound state. This chain is Rho GTPase-activating protein 68F (RhoGAP68F), found in Drosophila melanogaster (Fruit fly).